We begin with the raw amino-acid sequence, 339 residues long: GTPase Obg (339 aa).

Residues 1–159 (MKFVDEAFVR…RELKLELKLL (159 aa)) enclose the Obg domain. A disordered region spans residues 127–147 (NTHFKSSTNRAPRRTTSGEEG). An OBG-type G domain is found at 160 to 333 (ADVGLLGLPN…LCYDLMSFLE (174 aa)). GTP contacts are provided by residues 166-173 (GLPNAGKS), 191-195 (FTTLY), 213-216 (DIPG), 283-286 (NKID), and 314-316 (SAI). Positions 173 and 193 each coordinate Mg(2+).

This sequence belongs to the TRAFAC class OBG-HflX-like GTPase superfamily. OBG GTPase family. In terms of assembly, monomer. It depends on Mg(2+) as a cofactor.

It localises to the cytoplasm. In terms of biological role, an essential GTPase which binds GTP, GDP and possibly (p)ppGpp with moderate affinity, with high nucleotide exchange rates and a fairly low GTP hydrolysis rate. Plays a role in control of the cell cycle, stress response, ribosome biogenesis and in those bacteria that undergo differentiation, in morphogenesis control. The protein is GTPase Obg of Coxiella burnetii (strain CbuK_Q154) (Coxiella burnetii (strain Q154)).